We begin with the raw amino-acid sequence, 245 residues long: MSAPQDRTDDGGVPVPVTPAGATGGAPAELPPSSPAGRGMFGDQGTGDVSGYGGLVRPQRSIEAATRPYGGYFDEVADALEEAYPAFGEAIEKVVVDRGELTLHIRPERIAEVCQVMRDDLSLRFELCSSVSGVDYLGADACRLHVVYQLTSMTYRRQVRLEAAVSAENPHLPSVTSVYPTADWQERETYDMFGVIFDGHPGLTRILMPDDWEGHPQRKDYPLGGVPVEYKGAEIPPPDRRRSYQ.

Residues 1–10 (MSAPQDRTDD) show a composition bias toward basic and acidic residues. 2 disordered regions span residues 1–54 (MSAP…GYGG) and 216–245 (PQRK…RSYQ). The span at 11 to 28 (GGVPVPVTPAGATGGAPA) shows a compositional bias: low complexity. Residues 39–54 (GMFGDQGTGDVSGYGG) show a composition bias toward gly residues.

Belongs to the complex I 30 kDa subunit family. NDH-1 is composed of 14 different subunits. Subunits NuoB, C, D, E, F, and G constitute the peripheral sector of the complex.

Its subcellular location is the cell membrane. It carries out the reaction a quinone + NADH + 5 H(+)(in) = a quinol + NAD(+) + 4 H(+)(out). In terms of biological role, NDH-1 shuttles electrons from NADH, via FMN and iron-sulfur (Fe-S) centers, to quinones in the respiratory chain. The immediate electron acceptor for the enzyme in this species is believed to be a menaquinone. Couples the redox reaction to proton translocation (for every two electrons transferred, four hydrogen ions are translocated across the cytoplasmic membrane), and thus conserves the redox energy in a proton gradient. This chain is NADH-quinone oxidoreductase subunit C, found in Salinispora tropica (strain ATCC BAA-916 / DSM 44818 / JCM 13857 / NBRC 105044 / CNB-440).